A 1216-amino-acid chain; its full sequence is AF4/FMR2 family member 1 (1216 aa).

Disordered regions lie at residues M1–E52, K68–S104, I116–R139, P152–K217, A244–K275, and S352–G728. 2 stretches are compositionally biased toward basic and acidic residues: residues N9–P35 and H78–G99. Residues R166–L182 show a composition bias toward basic and acidic residues. Phosphoserine occurs at positions 183, 191, and 197. Low complexity predominate over residues S207–K217. The segment covering P252 to P266 has biased composition (pro residues). Residues P383–S406 are compositionally biased toward polar residues. Residues L408–Q424 are compositionally biased toward acidic residues. Positions P429–A438 are enriched in pro residues. A compositionally biased stretch (acidic residues) spans E457–P484. K682 carries the post-translational modification N6-acetyllysine. A compositionally biased stretch (low complexity) spans S710 to G728. Phosphoserine is present on residues S755 and S760. 2 disordered regions span residues R777 to A969 and A1094 to A1125. Over residues R789–S808 the composition is skewed to basic and acidic residues. Low complexity-rich tracts occupy residues K824–T846, P867–P886, P902–D915, and P1115–A1125.

This sequence belongs to the AF4 family. Component of the super elongation complex (SEC), at least composed of EAF1, EAF2, CDK9, MLLT3/AF9, AFF (AFF1 or AFF4), the P-TEFb complex and ELL (ELL, ELL2 or ELL3).

Its subcellular location is the nucleus. The polypeptide is AF4/FMR2 family member 1 (Aff1) (Mus musculus (Mouse)).